The following is a 342-amino-acid chain: viral G-protein coupled receptor (342 aa).

Residues 1–51 (MAAEDFLTIFLDDDESWNETLNMSGYDYSGNFSLEVSVCEMTTVVPYTWNV) are Extracellular-facing. N-linked (GlcNAc...) asparagine; by host glycosylation is found at Asn18, Asn22, and Asn31. A helical transmembrane segment spans residues 52-72 (GILSLIFLINVLGNGLVTYIF). The Cytoplasmic portion of the chain corresponds to 73-92 (CKHRSRAGAIDILLLGICLN). Residues 93-113 (SLCLSISLLAEVLMFLFPNII) form a helical membrane-spanning segment. Topologically, residues 114-121 (STGLCRLE) are extracellular. The chain crosses the membrane as a helical span at residues 122 to 142 (IFFYYLYVYLDIFSVVCVSLV). Residues 143–159 (RYLLVAYSTRSWPKKQS) lie on the Cytoplasmic side of the membrane. The chain crosses the membrane as a helical span at residues 160–180 (LGWVLTSAALLIALVLSGDAC). Over 181–217 (RHRSRVVDPVSKQAMCYENAGNMTADWRLHVRTVSVT) the chain is Extracellular. A helical transmembrane segment spans residues 218–238 (AGFLLPLALLILFYALTWCVV). At 239–251 (RRTKLQARRKVRG) the chain is on the cytoplasmic side. The chain crosses the membrane as a helical span at residues 252 to 272 (VIVAVVLLFFVFCFPYHVLNL). Over 273–293 (LDTLLRRRWIRDSCYTRGLIN) the chain is Extracellular. The helical transmembrane segment at 294 to 314 (VGLAVTSLLQALYSAVVPLIY) threads the bilayer. At 315 to 342 (SCLGSLFRQRMYGLFQSLRQSFMSGATT) the chain is on the cytoplasmic side.

The protein belongs to the G-protein coupled receptor 1 family. In terms of assembly, interacts with protein K7; this interaction promotes vGPCR proteasomal degradation. Interacts with host CADM1; this interaction is essential for chronic NF-kappa-B activation.

The protein localises to the host cell membrane. Its function is as follows. Receptor that signals constitutively via several signaling pathways including PI3K/AKT as well as mitogen- and stress-activated/MAP kinases. Promotes host cell proliferation and survival, modulates cell migration, stimulates angiogenesis, and recruits inflammatory cells, both in expressing cells and in neighboring cells. Maintains chronic activation of NF-kappa-B via interaction with host CADM1. This chain is viral G-protein coupled receptor (ORF74), found in Human herpesvirus 8 type P (isolate GK18) (HHV-8).